The primary structure comprises 334 residues: Formamidase (334 aa).

The region spanning 14 to 260 (FLVAAIQFPV…WEIVTGEIYP (247 aa)) is the CN hydrolase domain. Glu-60 functions as the Proton acceptor in the catalytic mechanism. Lys-133 acts as the Proton donor in catalysis. Residue Cys-166 is the Nucleophile of the active site.

This sequence belongs to the carbon-nitrogen hydrolase superfamily. Aliphatic amidase family.

It catalyses the reaction formamide + H2O = formate + NH4(+). Is an aliphatic amidase with a restricted substrate specificity, as it only hydrolyzes formamide. The polypeptide is Formamidase (Helicobacter pylori (strain G27)).